Reading from the N-terminus, the 542-residue chain is Membrane protein insertase YidC (542 aa).

The next 6 helical transmembrane spans lie at 6 to 26, 326 to 346, 350 to 370, 421 to 441, 458 to 478, and 501 to 521; these read NILL…WQTD, LVVD…LLMF, FVGN…GMLY, GGCL…WVLL, LSVQ…MFLM, and VIFT…WLVG.

It belongs to the OXA1/ALB3/YidC family. Type 1 subfamily. In terms of assembly, interacts with the Sec translocase complex via SecD. Specifically interacts with transmembrane segments of nascent integral membrane proteins during membrane integration.

Its subcellular location is the cell inner membrane. Functionally, required for the insertion and/or proper folding and/or complex formation of integral membrane proteins into the membrane. Involved in integration of membrane proteins that insert both dependently and independently of the Sec translocase complex, as well as at least some lipoproteins. Aids folding of multispanning membrane proteins. In Shewanella loihica (strain ATCC BAA-1088 / PV-4), this protein is Membrane protein insertase YidC.